A 601-amino-acid chain; its full sequence is Elongation factor 4 (601 aa).

The tr-type G domain occupies 6–188; sequence DHIRNFSIVA…AIVHQLPPPR (183 aa). GTP is bound by residues 18–23 and 135–138; these read DHGKST and NKVD.

It belongs to the TRAFAC class translation factor GTPase superfamily. Classic translation factor GTPase family. LepA subfamily.

The protein resides in the cell inner membrane. It carries out the reaction GTP + H2O = GDP + phosphate + H(+). Its function is as follows. Required for accurate and efficient protein synthesis under certain stress conditions. May act as a fidelity factor of the translation reaction, by catalyzing a one-codon backward translocation of tRNAs on improperly translocated ribosomes. Back-translocation proceeds from a post-translocation (POST) complex to a pre-translocation (PRE) complex, thus giving elongation factor G a second chance to translocate the tRNAs correctly. Binds to ribosomes in a GTP-dependent manner. The protein is Elongation factor 4 of Mesorhizobium japonicum (strain LMG 29417 / CECT 9101 / MAFF 303099) (Mesorhizobium loti (strain MAFF 303099)).